A 117-amino-acid chain; its full sequence is Minor capsid protein p17 (117 aa).

Asparagine 12 carries an N-linked (GlcNAc...) asparagine; by host glycan. Residues 39 to 59 (AILLGILILLVIILIIVAIVY) traverse the membrane as a helical segment. The interval 96-117 (KNSTSQQSHIPSDEQLAELAHS) is disordered. A glycan (N-linked (GlcNAc...) asparagine; by host) is linked at asparagine 97.

It belongs to the asfivirus minor capsid protein p17 family. Interacts with the minor capsid protein M1249L and with the hexon capsid protein p72 capsomers; these interactions form a rigid zipper structure that stabilizes the capsomers. Interacts with host STING1.

It localises to the virion membrane. Its subcellular location is the host endoplasmic reticulum membrane. Together with the penton and the other minor capsid proteins (M1249L, p49), forms a complicated network immediately below the outer capsid shell, stabilizing the whole capsid. Three copies of p17 encircle each p72 capsomer in the inner capsid shell, anchoring p72 capsomers on the inner membrane. Required for the assembly of the capsid and icosahedral morphogenesis. Additionally, inhibits the host cGAS-STING pathway through its interaction with STING1 and subsequent interference of the recruitment of downstream components TBK1 and IKBKE. The sequence is that of Minor capsid protein p17 from African swine fever virus (isolate Tick/South Africa/Pretoriuskop Pr4/1996) (ASFV).